The chain runs to 383 residues: Lipid-A-disaccharide synthase (383 aa).

This sequence belongs to the LpxB family.

The catalysed reaction is a lipid X + a UDP-2-N,3-O-bis[(3R)-3-hydroxyacyl]-alpha-D-glucosamine = a lipid A disaccharide + UDP + H(+). Its pathway is bacterial outer membrane biogenesis; LPS lipid A biosynthesis. Its function is as follows. Condensation of UDP-2,3-diacylglucosamine and 2,3-diacylglucosamine-1-phosphate to form lipid A disaccharide, a precursor of lipid A, a phosphorylated glycolipid that anchors the lipopolysaccharide to the outer membrane of the cell. This chain is Lipid-A-disaccharide synthase, found in Anaeromyxobacter sp. (strain K).